Consider the following 114-residue polypeptide: Large ribosomal subunit protein bL20c (114 aa).

The protein belongs to the bacterial ribosomal protein bL20 family.

It is found in the plastid. It localises to the cyanelle. Functionally, binds directly to 23S ribosomal RNA and is necessary for the in vitro assembly process of the 50S ribosomal subunit. It is not involved in the protein synthesizing functions of that subunit. This is Large ribosomal subunit protein bL20c (rpl20) from Cyanophora paradoxa.